A 143-amino-acid polypeptide reads, in one-letter code: 3-dehydroquinate dehydratase (143 aa).

Catalysis depends on tyrosine 22, which acts as the Proton acceptor. The substrate site is built by asparagine 73, histidine 79, and aspartate 86. Histidine 99 functions as the Proton donor in the catalytic mechanism. Residues 100–101 (IS) and arginine 110 each bind substrate.

It belongs to the type-II 3-dehydroquinase family. Homododecamer.

It carries out the reaction 3-dehydroquinate = 3-dehydroshikimate + H2O. The protein operates within metabolic intermediate biosynthesis; chorismate biosynthesis; chorismate from D-erythrose 4-phosphate and phosphoenolpyruvate: step 3/7. Functionally, catalyzes a trans-dehydration via an enolate intermediate. In Mycobacterium avium (strain 104), this protein is 3-dehydroquinate dehydratase.